A 287-amino-acid polypeptide reads, in one-letter code: Merozoite surface protein 2 (287 aa).

Positions 1 to 20 are cleaved as a signal peptide; the sequence is MKVIKTLSIINFFIFVTFNI. 2 N-linked (GlcNAc...) asparagine glycosylation sites follow: Asn-22 and Asn-36. Residues 42 to 248 form a disordered region; sequence SMTESNPPTG…DSQKECTDGN (207 aa). Positions 44–213 are polymorphic region; the sequence is TESNPPTGAS…EQTESPELQS (170 aa). Over residues 54–112 the composition is skewed to gly residues; the sequence is GSAGGSAGGSAGGSAGGSAGGSAGGSAGGSAGGSAGGSAGGSAGGSAGGSAGSGDGNGA. Repeat copies occupy residues 55–58, 59–62, 63–66, 67–70, 71–74, 75–78, 79–82, 83–86, 87–90, 91–94, 95–98, and 99–102. The interval 55 to 102 is 12 X 4 AA tandem repeats of S-A-G-G; that stretch reads SAGGSAGGSAGGSAGGSAGGSAGGSAGGSAGGSAGGSAGGSAGGSAGG. Low complexity predominate over residues 121-149; sequence SPSTPATTTTTTTTNDAEASTSTSSENPN. Composition is skewed to polar residues over residues 150–180 and 187–215; these read HNNA…NVPP and KSPT…QSAP. A glycan (N-linked (GlcNAc...) asparagine) is linked at Asn-164. N-linked (GlcNAc...) asparagine glycosylation occurs at Asn-236. An intrachain disulfide couples Cys-244 to Cys-252. N-linked (GlcNAc...) asparagine glycans are attached at residues Asn-260 and Asn-261. Asn-261 carries GPI-anchor amidated asparagine lipidation. The propeptide at 262–287 is removed in mature form; it reads SSNIASINKFVVLISATLVLSFAIFI.

The protein resides in the cell membrane. In terms of biological role, may play a role in the merozoite attachment to the erythrocyte. The sequence is that of Merozoite surface protein 2 from Plasmodium falciparum (isolate FCR-3 / Gambia).